Here is a 264-residue protein sequence, read N- to C-terminus: NAD kinase 1 (264 aa).

The active-site Proton acceptor is aspartate 45. Residues 45–46 (DG), glycine 46, 122–123 (NE), arginine 148, aspartate 150, serine 158, 161–166 (TAYNKS), and histidine 223 each bind NAD(+).

This sequence belongs to the NAD kinase family. In terms of assembly, homotetramer. Requires a divalent metal cation as cofactor.

It is found in the cytoplasm. The enzyme catalyses NAD(+) + ATP = ADP + NADP(+) + H(+). With respect to regulation, competitively inhibited by 5'-thioacetyladenosine (TAA) and di-(5'-thioadenosine) (DTA). Functionally, involved in the regulation of the intracellular balance of NAD and NADP, and is a key enzyme in the biosynthesis of NADP. Catalyzes specifically the phosphorylation on 2'-hydroxyl of the adenosine moiety of NAD to yield NADP. This Listeria monocytogenes serovar 1/2a (strain ATCC BAA-679 / EGD-e) protein is NAD kinase 1.